The following is a 107-amino-acid chain: Iron-binding protein IscA (107 aa).

Cysteine 35, cysteine 99, and cysteine 101 together coordinate Fe cation.

Belongs to the HesB/IscA family. In terms of assembly, homodimer; may form tetramers and higher multimers. Fe cation is required as a cofactor.

Is able to transfer iron-sulfur clusters to apo-ferredoxin. Multiple cycles of [2Fe2S] cluster formation and transfer are observed, suggesting that IscA acts catalytically. Recruits intracellular free iron so as to provide iron for the assembly of transient iron-sulfur cluster in IscU in the presence of IscS, L-cysteine and the thioredoxin reductase system TrxA/TrxB. The chain is Iron-binding protein IscA from Salmonella agona (strain SL483).